Reading from the N-terminus, the 326-residue chain is Vacuolar protein sorting-associated protein 26A-B (326 aa).

Belongs to the VPS26 family. Component of the heterotrimeric retromer cargo-selective complex (CSC) which is believed to associate with variable sorting nexins to form functionally distinct retromer complex variants.

The protein localises to the cytoplasm. Its subcellular location is the endosome membrane. It localises to the early endosome. Its function is as follows. Acts as a component of the retromer cargo-selective complex (CSC). The CSC is believed to be the core functional component of retromer or respective retromer complex variants acting to prevent missorting of selected transmembrane cargo proteins into the lysosomal degradation pathway. Retromer mediates retrograde transport of cargo proteins from endosomes to the trans-Golgi network (TGN). This is Vacuolar protein sorting-associated protein 26A-B (vps26a-b) from Xenopus laevis (African clawed frog).